A 215-amino-acid chain; its full sequence is FMN-dependent NADH:quinone oxidoreductase (215 aa).

17–19 contacts FMN; sequence SAS.

It belongs to the azoreductase type 1 family. Homodimer. The cofactor is FMN.

It carries out the reaction 2 a quinone + NADH + H(+) = 2 a 1,4-benzosemiquinone + NAD(+). The catalysed reaction is N,N-dimethyl-1,4-phenylenediamine + anthranilate + 2 NAD(+) = 2-(4-dimethylaminophenyl)diazenylbenzoate + 2 NADH + 2 H(+). Functionally, quinone reductase that provides resistance to thiol-specific stress caused by electrophilic quinones. Also exhibits azoreductase activity. Catalyzes the reductive cleavage of the azo bond in aromatic azo compounds to the corresponding amines. In Clostridium botulinum (strain Eklund 17B / Type B), this protein is FMN-dependent NADH:quinone oxidoreductase.